The sequence spans 401 residues: Stage II sporulation protein P (401 aa).

Residues 131 to 179 (TDYTNMPAESPPPSKVMEEEREANLAEIEKQQTQSDNAQKDPPKQTTGD) are disordered. Basic and acidic residues-rich tracts occupy residues 146-160 (VMEE…EIEK) and 168-179 (AQKDPPKQTTGD).

In Bacillus subtilis (strain 168), this protein is Stage II sporulation protein P (spoIIP).